The primary structure comprises 362 residues: Prostaglandin F2-alpha receptor (362 aa).

The Extracellular portion of the chain corresponds to 1–31 (MSTNSSIQPVSPESELLSNTTCQLEEDLSIS). N-linked (GlcNAc...) asparagine glycans are attached at residues Asn-4 and Asn-19. A helical membrane pass occupies residues 32-54 (FSIIFMTVGILSNSLAIAILMKA). The Cytoplasmic segment spans residues 55-69 (YQRFRQKYKSSFLLL). A helical transmembrane segment spans residues 70–90 (ASALVITDFFGHLINGTIAVF). Over 91-109 (VYASDKDWIYFDKSNILCS) the chain is Extracellular. The cysteines at positions 108 and 186 are disulfide-linked. A helical membrane pass occupies residues 110–131 (IFGICMVFSGLCPLFLGSLMAI). The Cytoplasmic portion of the chain corresponds to 132 to 152 (ERCIGVTKPIFHSTKITTKHV). A helical transmembrane segment spans residues 153-175 (KMMLSGVCFFAVFVALLPILGHR). Topologically, residues 176-198 (DYKIQASRTWCFYKTDEIKDWED) are extracellular. Residues 199 to 224 (RFYLLLFAFLGLLALGISFVCNAITG) traverse the membrane as a helical segment. At 225 to 250 (ISLLKVKFRSQQHRQGRSHHFEMVIQ) the chain is on the cytoplasmic side. The chain crosses the membrane as a helical span at residues 251–267 (LLGIMCVSCICWSPFLV). Topologically, residues 268–285 (TMASIGMNIQDFKDSCER) are extracellular. Residues 286 to 307 (TLFTLRMATWNQILDPWVYILL) form a helical membrane-spanning segment. The Cytoplasmic segment spans residues 308-362 (RKAVLRNLYVCTRRCCGVHVISLHVWELSSIKDSLKVAAISDLPVTEKVTQQTST).

The protein belongs to the G-protein coupled receptor 1 family.

It localises to the cell membrane. In terms of biological role, receptor for prostaglandin F2-alpha (PGF2-alpha). The activity of this receptor is mediated by G proteins which activate a phosphatidylinositol-calcium second messenger system. Initiates luteolysis in the corpus luteum. This is Prostaglandin F2-alpha receptor (PTGFR) from Bos taurus (Bovine).